The chain runs to 162 residues: Corticoliberin-2 (162 aa).

Positions 1–24 (MRLNFLVTTMALLVAFPPPYECRA) are cleaved as a signal peptide. Positions 25–119 (IDSSSNQPVT…ALDSEERERR (95 aa)) are excised as a propeptide. Residues 57 to 79 (LGNRNKNSPRSPPDTYPEASQYS) are disordered. F160 is modified (phenylalanine amide).

The protein belongs to the sauvagine/corticotropin-releasing factor/urotensin I family.

It localises to the secreted. Its function is as follows. This hormone from hypothalamus regulates the release of corticotropin from pituitary gland. The polypeptide is Corticoliberin-2 (crf2) (Catostomus commersonii (White sucker)).